A 263-amino-acid polypeptide reads, in one-letter code: Putative aliphatic sulfonates transport permease protein SsuC (263 aa).

Residues 1–13 (MATPVKKWLLRVA) are Cytoplasmic-facing. The chain crosses the membrane as a helical span at residues 14–34 (PWFLPVGIVAVWQLASSVGWL). At 35–43 (STRILPSPE) the chain is on the periplasmic side. The chain crosses the membrane as a helical span at residues 44–64 (GVVTAFWTLSASGELWQHLAI). Residues 58–242 (LWQHLAISSW…LLGKLADVSA (185 aa)) enclose the ABC transmembrane type-1 domain. The Cytoplasmic portion of the chain corresponds to 65-68 (SSWR). Residues 69–89 (ALIGFSIGGSLGLILGLISGL) traverse the membrane as a helical segment. Residues 90–102 (SRWGERLLDTSIQ) lie on the Periplasmic side of the membrane. The chain crosses the membrane as a helical span at residues 103-122 (MLRNVPHLALIPLVILWFGI). Residues 123–125 (DES) are Cytoplasmic-facing. A helical membrane pass occupies residues 126–148 (AKIFLVALGTLFPIYINTWHGIR). The Periplasmic portion of the chain corresponds to 149 to 164 (NIDRGLVEMARSYGLS). A helical membrane pass occupies residues 165–185 (GIPLFIHVILPGALPSIMVGV). Topologically, residues 186–187 (RF) are cytoplasmic. Residues 188–208 (ALGLMWLTLIVAETISANSGI) form a helical membrane-spanning segment. Over 209-217 (GYLAMNARE) the chain is Periplasmic. The chain crosses the membrane as a helical span at residues 218 to 238 (FLQTDVVVVAIILYALLGKLA). At 239 to 263 (DVSAQLLERLWLRWNPAYHLKEATV) the chain is on the cytoplasmic side.

It belongs to the binding-protein-dependent transport system permease family. CysTW subfamily.

Its subcellular location is the cell inner membrane. Part of a binding-protein-dependent transport system for aliphatic sulfonates. Probably responsible for the translocation of the substrate across the membrane. The sequence is that of Putative aliphatic sulfonates transport permease protein SsuC (ssuC) from Escherichia coli (strain K12).